Reading from the N-terminus, the 888-residue chain is DNA mismatch repair protein MutS (888 aa).

The interval I249 to P271 is disordered. G638–S645 contacts ATP.

This sequence belongs to the DNA mismatch repair MutS family.

Functionally, this protein is involved in the repair of mismatches in DNA. It is possible that it carries out the mismatch recognition step. This protein has a weak ATPase activity. The chain is DNA mismatch repair protein MutS from Nitrobacter winogradskyi (strain ATCC 25391 / DSM 10237 / CIP 104748 / NCIMB 11846 / Nb-255).